The following is a 457-amino-acid chain: GTPase Der (457 aa).

2 consecutive EngA-type G domains span residues 4-169 (PTIA…PENN) and 177-352 (IMMS…NQHR). Residues 10 to 17 (GRPNVGKS), 57 to 61 (DTGGL), 120 to 123 (NKCE), 183 to 190 (GRPNVGKS), 230 to 234 (DTAGI), and 295 to 298 (NKWD) each bind GTP. The 86-residue stretch at 353–438 (RRVTTSVVNE…PLILLWRGKQ (86 aa)) folds into the KH-like domain.

It belongs to the TRAFAC class TrmE-Era-EngA-EngB-Septin-like GTPase superfamily. EngA (Der) GTPase family. As to quaternary structure, associates with the 50S ribosomal subunit.

Its function is as follows. GTPase that plays an essential role in the late steps of ribosome biogenesis. The chain is GTPase Der from Prochlorococcus marinus (strain AS9601).